The following is a 59-amino-acid chain: MPSSKKKKEDVPIASMAGLVRYYESEKEKVKISPKVVVVASIVLIAGVIIASFIIPPPL.

The Cytoplasmic segment spans residues 1–35 (MPSSKKKKEDVPIASMAGLVRYYESEKEKVKISPK). A helical transmembrane segment spans residues 36-56 (VVVVASIVLIAGVIIASFIIP). Residues 57-59 (PPL) lie on the Extracellular side of the membrane.

Belongs to the SEC61-beta family. As to quaternary structure, component of the protein translocase complex. Heterotrimer consisting of alpha (SecY), beta (SecG) and gamma (SecE) subunits. Can form oligomers of the heterotrimer.

It is found in the cell membrane. Its function is as follows. Involved in protein export. The function of the beta subunit is unknown, but it may be involved in stabilization of the trimeric complex. The sequence is that of Preprotein translocase subunit SecG from Sulfolobus acidocaldarius (strain ATCC 33909 / DSM 639 / JCM 8929 / NBRC 15157 / NCIMB 11770).